Reading from the N-terminus, the 365-residue chain is S-adenosylmethionine:tRNA ribosyltransferase-isomerase (365 aa).

Belongs to the QueA family. In terms of assembly, monomer.

The protein resides in the cytoplasm. It carries out the reaction 7-aminomethyl-7-carbaguanosine(34) in tRNA + S-adenosyl-L-methionine = epoxyqueuosine(34) in tRNA + adenine + L-methionine + 2 H(+). The protein operates within tRNA modification; tRNA-queuosine biosynthesis. Functionally, transfers and isomerizes the ribose moiety from AdoMet to the 7-aminomethyl group of 7-deazaguanine (preQ1-tRNA) to give epoxyqueuosine (oQ-tRNA). The sequence is that of S-adenosylmethionine:tRNA ribosyltransferase-isomerase from Helicobacter hepaticus (strain ATCC 51449 / 3B1).